Here is a 122-residue protein sequence, read N- to C-terminus: Ribosome-binding factor A (122 aa).

The protein belongs to the RbfA family. In terms of assembly, monomer. Binds 30S ribosomal subunits, but not 50S ribosomal subunits or 70S ribosomes.

It is found in the cytoplasm. Functionally, one of several proteins that assist in the late maturation steps of the functional core of the 30S ribosomal subunit. Associates with free 30S ribosomal subunits (but not with 30S subunits that are part of 70S ribosomes or polysomes). Required for efficient processing of 16S rRNA. May interact with the 5'-terminal helix region of 16S rRNA. In Pelagibacter ubique (strain HTCC1062), this protein is Ribosome-binding factor A.